Here is a 282-residue protein sequence, read N- to C-terminus: Pantothenate synthetase (282 aa).

Residue 30-37 coordinates ATP; sequence MGFLHDGH. His-37 (proton donor) is an active-site residue. Gln-60 lines the (R)-pantoate pocket. Residue Gln-60 participates in beta-alanine binding. An ATP-binding site is contributed by 146–149; it reads GQKD. (R)-pantoate is bound at residue Gln-152. ATP is bound by residues Ile-175 and 183-186; that span reads KSSR.

The protein belongs to the pantothenate synthetase family. In terms of assembly, homodimer.

It localises to the cytoplasm. It catalyses the reaction (R)-pantoate + beta-alanine + ATP = (R)-pantothenate + AMP + diphosphate + H(+). Its pathway is cofactor biosynthesis; (R)-pantothenate biosynthesis; (R)-pantothenate from (R)-pantoate and beta-alanine: step 1/1. Its function is as follows. Catalyzes the condensation of pantoate with beta-alanine in an ATP-dependent reaction via a pantoyl-adenylate intermediate. This Campylobacter jejuni subsp. jejuni serotype O:23/36 (strain 81-176) protein is Pantothenate synthetase.